A 211-amino-acid chain; its full sequence is Large ribosomal subunit protein uL3 (211 aa).

The residue at position 150 (Gln-150) is an N5-methylglutamine.

It belongs to the universal ribosomal protein uL3 family. As to quaternary structure, part of the 50S ribosomal subunit. Forms a cluster with proteins L14 and L19. In terms of processing, methylated by PrmB.

Its function is as follows. One of the primary rRNA binding proteins, it binds directly near the 3'-end of the 23S rRNA, where it nucleates assembly of the 50S subunit. The polypeptide is Large ribosomal subunit protein uL3 (Pseudomonas fluorescens (strain ATCC BAA-477 / NRRL B-23932 / Pf-5)).